We begin with the raw amino-acid sequence, 1381 residues long: Regulator of G-protein signaling 12 (1381 aa).

In terms of domain architecture, PDZ spans 21-98 (SVEVARGRAG…VLHMVIAEGT (78 aa)). Residues Ser-171 and Ser-194 each carry the phosphoserine modification. Lys-195 participates in a covalent cross-link: Glycyl lysine isopeptide (Lys-Gly) (interchain with G-Cter in SUMO2). In terms of domain architecture, PID spans 223–390 (SILNVAMVVG…VLQFISVLYR (168 aa)). Disordered stretches follow at residues 409–428 (ADAH…IGNF), 442–528 (LGGG…GAAG), and 620–644 (RKTK…SQRT). Residues 412–428 (HQNNSTSSNSDSGIGNF) are compositionally biased toward polar residues. Arg-524 and Arg-633 each carry omega-N-methylarginine. Phosphoserine occurs at positions 661 and 671. Residues 715–832 (SFERLLQDPV…LKSQLYQECV (118 aa)) enclose the RGS domain. The disordered stretch occupies residues 842–942 (PDSQQVPSSP…ESQGSVSSAG (101 aa)). Over residues 849 to 869 (SSPASKHSISSDHSNVSTPKK) the composition is skewed to low complexity. Ser-850 and Ser-879 each carry phosphoserine. Over residues 914–923 (DHGDHAHDAP) the composition is skewed to basic and acidic residues. Ser-943 is modified (phosphoserine). RBD domains are found at residues 962 to 1032 (KHCC…LEKR) and 1034 to 1104 (LFRL…LEER). Residues 1102–1117 (EERDPSRGKVSTDKQK) are compositionally biased toward basic and acidic residues. A disordered region spans residues 1102–1169 (EERDPSRGKV…RDPRLSKREE (68 aa)). Residues 1122-1132 (KQNSAVNSSPR) are compositionally biased toward polar residues. Positions 1151–1169 (IRGENGKSARDPRLSKREE) are enriched in basic and acidic residues. In terms of domain architecture, GoLoco spans 1187 to 1209 (AEEFFELISKAQSNRADDQRGLL). Disordered stretches follow at residues 1227-1318 (SELA…QEGT) and 1347-1381 (LMGE…TSRF). The segment covering 1261–1280 (SDSPATSPASAQSPCSAYSP) has biased composition (low complexity). The segment covering 1361–1381 (LPPPPTPQDTPGPPRPGTSRF) has biased composition (pro residues).

Interacts with GNAI1, GNAI2 and GNAI3; the interactions are GDP-dependent. In terms of tissue distribution, expressed in brain.

Its subcellular location is the nucleus. It localises to the cytoplasm. It is found in the cell projection. The protein localises to the dendrite. The protein resides in the synapse. Its function is as follows. Regulates G protein-coupled receptor signaling cascades. Inhibits signal transduction by increasing the GTPase activity of G protein alpha subunits, thereby driving them into their inactive GDP-bound form. In Mus musculus (Mouse), this protein is Regulator of G-protein signaling 12 (Rgs12).